Consider the following 171-residue polypeptide: UPF0398 protein stu0232 (171 aa).

This sequence belongs to the UPF0398 family.

This Streptococcus thermophilus (strain ATCC BAA-250 / LMG 18311) protein is UPF0398 protein stu0232.